A 342-amino-acid polypeptide reads, in one-letter code: MTQAVDIGTIQTLIRLEVPDQVPLTGSIPYDALVKKLKTPVDPELLQRLIRFTRLVGFLDEDAEGAVKHSPMSAIFVNDPDTAGQARFMADFGIRPCSFIYESIKLDPSGEAARQGPLALMAREPGAREGPTFFEVLEKDPVNRKRWHDGMAVHNDSMVRHVAGAYDWGTVQSLVDIGGSEGHVAAVIVNAFPHIQITVQDLPEIIEKARQRGDRHPNIIFEEHDFFTPQPRIADAYFLRLILHDWNDADCTRIVRQISSALRPGARLLIMDAVLPEPGEGSLQSERRLRRSDIGMYTLFSAKERSLAQMRRLVEDCDSRLRFEKLYTPPGSHASMLSWICE.

D201 serves as a coordination point for S-adenosyl-L-methionine. The Proton acceptor role is filled by H244.

It belongs to the class I-like SAM-binding methyltransferase superfamily. Cation-independent O-methyltransferase family. In terms of assembly, homodimer.

It carries out the reaction 6-hydroxytryprostatin B + S-adenosyl-L-methionine = tryprostatin A + S-adenosyl-L-homocysteine + H(+). It participates in mycotoxin biosynthesis. Its function is as follows. 6-hydroxytryprostatin B O-methyltransferase; part of the gene cluster that mediates the biosynthesis of fumitremorgins, indole alkaloids that carry not only intriguing chemical structures, but also interesting biological and pharmacological activities. The biosynthesis of fumitremorgin-type alkaloids begins by condensation of the two amino acids L-tryptophan and L-proline to brevianamide F, catalyzed by the non-ribosomal peptide synthetase ftmA. Brevianamide F is then prenylated by the prenyltransferase ftmPT1/ftmB in the presence of dimethylallyl diphosphate, resulting in the formation of tryprostatin B. The three cytochrome P450 monooxygenases, ftmP450-1/ftmC, ftmP450-2/ftmE and ftmP450-3/FtmG, are responsible for the conversion of tryprostatin B to 6-hydroxytryprostatin B, tryprostatin A to fumitremorgin C and fumitremorgin C to 12,13-dihydroxyfumitremorgin C, respectively. The putative methyltransferase ftmMT/ftmD is expected for the conversion of 6-hydroxytryprostatin B to tryprostatin A. FtmPT2/FtmH catalyzes the prenylation of 12,13-dihydroxyfumitre-morgin C in the presence of dimethylallyl diphosphate, resulting in the formation of fumitremorgin B. Fumitremorgin B is further converted to verruculogen by ftmOx1/ftmF via the insertion of an endoperoxide bond between the two prenyl moieties. In some fungal species, verruculogen is further converted to fumitremorgin A, but the enzymes involved in this step have not been identified yet. The protein is 6-hydroxytryprostatin B O-methyltransferase of Aspergillus fumigatus (strain ATCC MYA-4609 / CBS 101355 / FGSC A1100 / Af293) (Neosartorya fumigata).